The sequence spans 177 residues: Large ribosomal subunit protein uL10 (177 aa).

This sequence belongs to the universal ribosomal protein uL10 family. Part of the ribosomal stalk of the 50S ribosomal subunit. The N-terminus interacts with L11 and the large rRNA to form the base of the stalk. The C-terminus forms an elongated spine to which L12 dimers bind in a sequential fashion forming a multimeric L10(L12)X complex.

In terms of biological role, forms part of the ribosomal stalk, playing a central role in the interaction of the ribosome with GTP-bound translation factors. This Xanthomonas oryzae pv. oryzae (strain MAFF 311018) protein is Large ribosomal subunit protein uL10.